Consider the following 420-residue polypeptide: Transcription factor bHLH89 (420 aa).

Residues 196–216 are disordered; it reads EENNNLDDGLNRKGRGSKKRK. Over residues 207 to 216 the composition is skewed to basic residues; sequence RKGRGSKKRK. One can recognise a bHLH domain in the interval 212–261; the sequence is SKKRKIFPTERERRVHFKDRFGDLKNLIPNPTKNDRASIVGEAIDYIKEL.

Homodimer. As to expression, flowers.

The protein localises to the nucleus. The protein is Transcription factor bHLH89 (BHLH89) of Arabidopsis thaliana (Mouse-ear cress).